A 241-amino-acid polypeptide reads, in one-letter code: uncharacterized protein (241 aa).

6 helical membrane-spanning segments follow: residues 1 to 21, 43 to 63, 75 to 95, 108 to 128, 160 to 180, and 200 to 220; these read MMMALQIFIKILPIMFFGILL, FPIIAVFFVSSTSGSFLLKNL, LPIYFLGMFVFGIHIILFYAI, IYVLIKFLVTCNYLIISVLML, VLTSFVPSVLIITYLIEHGLL, and ILVIVLTGLATISGAIGIASG.

To M.jannaschii MJ0871, MJ0880 and MJ1556.

The protein localises to the cell membrane. This is an uncharacterized protein from Methanocaldococcus jannaschii (strain ATCC 43067 / DSM 2661 / JAL-1 / JCM 10045 / NBRC 100440) (Methanococcus jannaschii).